A 1226-amino-acid chain; its full sequence is MNQSISSLIKLKFLQSHSNDKNGNKKGGSNVSTGIDKLRESESYRSPFLQLAEIQEHTNNDDDKLDVKECEPTKKHSKLSRIRRKMGRLDLNFRSANEKGSEDDEILVAQHLRNGQDPEEMPFKSENNIDSIEKVPKPDGERVTLTSSGSDNVKRNSKHAPFIPVKPALEKFPSSNRLSRDYRKSQEPTLFNGDRLVPTLPTVSRISTSSSVGSSTAASRYFNPSKRAVVASSSSSSSSIKFNSLHAIPLDATPQIELAKQQDEISKRRFGRRRSRTVDVFDYINKNNTAKNKPPLSPSSFIRTIDEKNTNSLMQDPMGSRGPLLPDDANIISNDTDGAEASHPDHQVLSRSRSQSTSFVQGKGGKRKSIEDEGYHNKLGLPHGSGPTSVYNNKSNANSTITGMSRRSSSIVNALSSFVNLRSSSLSSSRQQHLQQQQQLQQKLDVSLEDLPPVPAPEFSDSCKDFLIKLAPYGKFIGIILTEKDDEFKKNCLNYLLTNCFEFKNDPLDIALRKLLMFLELPKETQQIDRLIMAFSFAYYKAQKSYSKKKGIECPWSNADQVYFIAFSLLMLHTDYFNPNNKSKMTKHDFVDLVHNDKYSGGNEIPMAVLTYFYENVTAKESPKFNYFLMSPMALDDSILDKDAFDTNFAITLSSNSMYSPIDMIKRGSIIPKEASLSPIFYPLTNSISASGIAPSTAASCPPSTSGTINGANLGTANSNSNRPASNSISSYFSYNPSSSSSGNATLVQDDINVYSHIINDTLNEVNLFPEVSKYWNKNALKANLLRNEEHKYEKYYSIMNDTKGGYLRFHKSQLNKLNLPNFEILNDNSRSGCKNSDYKYCKILQMGAIMNLGMPSRKFSIVNSAKIHWKKEFAILTSLGLLICDKMDWINPQMMKDPKSGTTNYIIDFKSGFSFVPGSTIDVYNGLFADRERDSLGKSHFASLVLAYTEHHSTGSHTSNTTAASSSAKHNEGVFEPSSDEEDSITNSTDGTSSVSNGESDNDSVSSSDNQLSSNDSNEDYHSIKDEYPIFEDENADCLLYLHTCHRNFIWKCANKYERDNWIDSINLFSAYDGCYVEIGSIANTICNKRKLTILQRMERLRSIKSAKWEKLKKFESTLMLMGKCVPISTKTKTDMINRIRQLAVRMDWLIYEIKRSELFVSIIKEVTRKQAEKNILEHGKGEEEGQGNNDDSDGIDDIEESFLFNENSLQVCVSDSSYDEYSNE.

Disordered stretches follow at residues 17–39 (HSND…DKLR) and 113–158 (RNGQ…RNSK). The segment covering 131–142 (SIEKVPKPDGER) has biased composition (basic and acidic residues). A Phosphothreonine modification is found at Thr277. 3 disordered regions span residues 311-405 (NSLM…TGMS), 954-1022 (STGS…NEDY), and 1178-1198 (LEHG…DGID). Polar residues predominate over residues 349 to 360 (LSRSRSQSTSFV). Ser369 is subject to Phosphoserine. Over residues 386–405 (GPTSVYNNKSNANSTITGMS) the composition is skewed to polar residues. The 216-residue stretch at 405–620 (SRRSSSIVNA…TYFYENVTAK (216 aa)) folds into the SEC7 domain. The PH domain maps to 844 to 1074 (ILQMGAIMNL…DSINLFSAYD (231 aa)). Composition is skewed to low complexity over residues 956 to 969 (GSHT…SSSA) and 994 to 1017 (SSVS…SSND).

It is found in the cytoplasm. With respect to regulation, inhibited by brefeldin A. In terms of biological role, guanine nucleotide exchange factor for Arf GTPases, stimulating the nucleotide exchange from the GDP-bound to the GTP-bound form. Catalyzes both the GDP release by and the GTP binding to ARF2. Has no exchange activity on Rab GTPases. Involved in vesicular transport. The chain is Arf guanine nucleotide exchange factor SYT1 (SYT1) from Saccharomyces cerevisiae (strain ATCC 204508 / S288c) (Baker's yeast).